The sequence spans 519 residues: Cytosol aminopeptidase (519 aa).

Ser42 carries the post-translational modification Phosphoserine. N6-succinyllysine is present on Lys45. Phosphoserine is present on Ser54. 2 positions are modified to N6-succinyllysine: Lys61 and Lys103. A phosphoserine mark is found at Ser180 and Ser194. 3 residues coordinate Zn(2+): Leu202, Met203, and Thr205. Position 238 is a phosphoserine (Ser238). Zn(2+) is bound by residues Lys282 and Asp287. The substrate site is built by Lys282, Asp287, Ser292, and Lys294. Residue Asp287 participates in Mg(2+) binding. The active site involves Lys294. Residues Arg303, Asp305, Asp364, and Glu366 each coordinate Zn(2+). 2 residues coordinate substrate: Asp305 and Asp364. 2 residues coordinate Mg(2+): Asp364 and Glu366. Residue Arg368 is part of the active site. The residue at position 455 (Lys455) is an N6-acetyllysine; alternate. Residue Lys455 is modified to N6-succinyllysine; alternate. Lys476 carries the post-translational modification N6-succinyllysine. Lys489 is subject to N6-acetyllysine; alternate. Lys489 carries the N6-succinyllysine; alternate modification.

Belongs to the peptidase M17 family. In terms of assembly, homohexamer. Requires Zn(2+) as cofactor. Mn(2+) is required as a cofactor.

It is found in the cytoplasm. The enzyme catalyses Release of an N-terminal amino acid, Xaa-|-Yaa-, in which Xaa is preferably Leu, but may be other amino acids including Pro although not Arg or Lys, and Yaa may be Pro. Amino acid amides and methyl esters are also readily hydrolyzed, but rates on arylamides are exceedingly low.. It catalyses the reaction an S-substituted L-cysteinylglycine + H2O = an S-substituted L-cysteine + glycine. The catalysed reaction is L-cysteinylglycine + H2O = L-cysteine + glycine. It carries out the reaction S-benzyl-L-cysteinylglycine + H2O = S-benzyl-L-cysteine + glycine. The enzyme catalyses Release of N-terminal proline from a peptide.. Zofenoprilat inhibits Cys-Gly hydrolysis activity. In terms of biological role, cytosolic metallopeptidase that catalyzes the removal of unsubstituted N-terminal hydrophobic amino acids from various peptides. The presence of Zn(2+) ions is essential for the peptidase activity, and the association with other cofactors can modulate the substrate spectificity of the enzyme. For instance, in the presence of Mn(2+), it displays a specific Cys-Gly hydrolyzing activity of Cys-Gly-S-conjugates. Involved in the metabolism of glutathione and in the degradation of glutathione S-conjugates, which may play a role in the control of the cell redox status. This is Cytosol aminopeptidase from Bos taurus (Bovine).